A 263-amino-acid polypeptide reads, in one-letter code: Endonuclease 8 (263 aa).

Pro2 acts as the Schiff-base intermediate with DNA in catalysis. Glu3 acts as the Proton donor in catalysis. The active-site Proton donor; for beta-elimination activity is the Lys53. Residues Gln70, Arg125, and Asn169 each coordinate DNA. The FPG-type zinc finger occupies 229-263 (KVFHRDGEACERCGGIIEKTTLSSRPFYWCPHCQK). Arg253 serves as the catalytic Proton donor; for delta-elimination activity.

Belongs to the FPG family. It depends on Zn(2+) as a cofactor.

It carries out the reaction 2'-deoxyribonucleotide-(2'-deoxyribose 5'-phosphate)-2'-deoxyribonucleotide-DNA = a 3'-end 2'-deoxyribonucleotide-(2,3-dehydro-2,3-deoxyribose 5'-phosphate)-DNA + a 5'-end 5'-phospho-2'-deoxyribonucleoside-DNA + H(+). Functionally, involved in base excision repair of DNA damaged by oxidation or by mutagenic agents. Acts as a DNA glycosylase that recognizes and removes damaged bases. Has a preference for oxidized pyrimidines, such as thymine glycol, 5,6-dihydrouracil and 5,6-dihydrothymine. Has AP (apurinic/apyrimidinic) lyase activity and introduces nicks in the DNA strand. Cleaves the DNA backbone by beta-delta elimination to generate a single-strand break at the site of the removed base with both 3'- and 5'-phosphates. This chain is Endonuclease 8, found in Salmonella arizonae (strain ATCC BAA-731 / CDC346-86 / RSK2980).